Reading from the N-terminus, the 217-residue chain is Glycerol-3-phosphate acyltransferase (217 aa).

5 helical membrane passes run Met1–Thr21, Thr54–Val74, Ala84–Leu104, Val126–Leu146, and Leu165–Ile185.

Belongs to the PlsY family. In terms of assembly, probably interacts with PlsX.

It localises to the cell inner membrane. The enzyme catalyses an acyl phosphate + sn-glycerol 3-phosphate = a 1-acyl-sn-glycero-3-phosphate + phosphate. The protein operates within lipid metabolism; phospholipid metabolism. Its function is as follows. Catalyzes the transfer of an acyl group from acyl-phosphate (acyl-PO(4)) to glycerol-3-phosphate (G3P) to form lysophosphatidic acid (LPA). This enzyme utilizes acyl-phosphate as fatty acyl donor, but not acyl-CoA or acyl-ACP. The sequence is that of Glycerol-3-phosphate acyltransferase from Rippkaea orientalis (strain PCC 8801 / RF-1) (Cyanothece sp. (strain PCC 8801)).